A 1017-amino-acid chain; its full sequence is Adhesion G-protein coupled receptor G2 (1017 aa).

The N-terminal stretch at 1-37 is a signal peptide; the sequence is MVFSVRQCGHVGRTEEVLLTFKIFLVIICLHVVLVTS. Residues 38-627 lie on the Extracellular side of the membrane; that stretch reads LEEDTDNSSL…TSVLPAQMMA (590 aa). N-linked (GlcNAc...) asparagine glycosylation is found at Asn-44, Asn-85, Asn-99, Asn-111, Asn-117, Asn-144, Asn-162, Asn-186, and Asn-194. Residues 301–366 form a disordered region; sequence PLSPQPSAPI…NTTSAPPVQT (66 aa). Positions 308–320 are enriched in low complexity; the sequence is APIASSPAIDMPP. Composition is skewed to polar residues over residues 321–335 and 344–366; these read QSETISSPMPQTHVS and SFSSPTVSAPANVNTTSAPPVQT. Asn-357, Asn-370, Asn-435, Asn-438, Asn-456, Asn-461, Asn-528, Asn-542, Asn-547, Asn-551, and Asn-597 each carry an N-linked (GlcNAc...) asparagine glycan. In terms of domain architecture, GAIN-B spans 462–619; that stretch reads TTTFVAQDPA…GVLLDLSRTS (158 aa). 2 cysteine pairs are disulfide-bonded: Cys-570/Cys-601 and Cys-589/Cys-603. Residues 570-619 are GPS; sequence CVFWDLGRNGGRGGWSDNGCSVKDRRLNETICTCSHLTSFGVLLDLSRTS. The segment at 608 to 619 is stachel; sequence SFGVLLDLSRTS. A helical transmembrane segment spans residues 628–648; sequence LTFITYIGCGLSSIFLSVTLV. Residues 649 to 667 lie on the Cytoplasmic side of the membrane; it reads TYIAFEKIRRDYPSKILIQ. A helical transmembrane segment spans residues 668–688; sequence LCAALLLLNLVFLLDSWIALY. The Extracellular portion of the chain corresponds to 689–693; it reads KMQGL. A helical membrane pass occupies residues 694–714; it reads CISVAVFLHYFLLVSFTWMGL. An intrachain disulfide couples Cys-694 to Cys-778. Topologically, residues 715–737 are cytoplasmic; the sequence is EAFHMYLALVKVFNTYIRKYILK. Residues 738-758 traverse the membrane as a helical segment; that stretch reads FCIVGWGVPAVVVTIILTISP. At 759–789 the chain is on the extracellular side; sequence DNYGLGSYGKFPNGSPDDFCWINNNAVFYIT. Residues 790–810 form a helical membrane-spanning segment; sequence VVGYFCVIFLLNVSMFIVVLV. The Cytoplasmic segment spans residues 811 to 834; that stretch reads QLCRIKKKKQLGAQRKTSIQDLRS. A helical transmembrane segment spans residues 835 to 855; sequence IAGLTFLLGITWGFAFFAWGP. Residues 856 to 857 lie on the Extracellular side of the membrane; sequence VN. Asn-857 carries an N-linked (GlcNAc...) asparagine glycan. The chain crosses the membrane as a helical span at residues 858-878; sequence VTFMYLFAIFNTLQGFFIFIF. Position 868 (Asn-868) interacts with 3beta-hydroxyandrost-5-en-17-one. Residues 879-1017 are Cytoplasmic-facing; the sequence is YCVAKENVRK…RGSLHFIEQM (139 aa). The disordered stretch occupies residues 918-939; the sequence is QTVNQGVSSSSNSLQSSSNSTN. Position 1010 is a phosphoserine (Ser-1010).

This sequence belongs to the G-protein coupled receptor 2 family. Adhesion G-protein coupled receptor (ADGR) subfamily. Heterodimer of 2 chains generated by proteolytic processing; the large extracellular N-terminal fragment and the membrane-bound C-terminal fragment predominantly remain associated and non-covalently linked. Interacts with CFTR. Proteolytically cleaved into 2 subunits, an extracellular subunit and a seven-transmembrane subunit. In terms of processing, highly glycosylated. As to expression, epididymis-specific expression (at protein level). Both subunits are associated with apical membranes of efferent ductule and proximal epididymal duct epithelia. Mainly expressed in the nonciliated principal cells of the proximal excurrent ducts. Specifically over-expressed in Ewing sarcomas but also up-regulated in a number of carcinomas derived from prostate, kidney or lung.

The protein resides in the apical cell membrane. Forms a heterodimer of 2 chains generated by proteolytic processing that remain associated through non-covalent interactions mediated by the GAIN-B domain. In the inactivated receptor, the Stachel sequence (also named stalk) is embedded in the GAIN-B domain, where it adopts a beta-strand conformation. On activation, the Stachel moves into the 7 transmembrane region and adopts a twisted hook-shaped configuration that forms contacts within the receptor, leading to coupling of a G-alpha protein, which activates signaling. The cleaved GAIN-B and N-terminal domains can then dissociate from the rest of the receptor. Deoxycorticosterone (DOC) acts as an antagonist of ADGRG2. Its function is as follows. Adhesion G-protein coupled receptor (aGPCR) for steroid hormones, such as dehydroepiandrosterone (DHEA; also named 3beta-hydroxyandrost-5-en-17-one) and androstenedione. Involved in a signal transduction pathway controlling epididymal function and male fertility. Ligand binding causes a conformation change that triggers signaling via guanine nucleotide-binding proteins (G proteins) and modulates the activity of downstream effectors, such as adenylate cyclase. ADGRG2 is coupled to G(s) G proteins and mediates activation of adenylate cyclase activity. Also able to couple with G(q) G proteins in vitro. Together with CFTR, required to promote fluid reabsorption within efferent ductule. This Homo sapiens (Human) protein is Adhesion G-protein coupled receptor G2.